Consider the following 132-residue polypeptide: MAPKAEKKPAEKAPAPKAEKKIAKEGGTSEIVKKKKKTKKSTETYKIYIFKVLKQVHPDIGISGKAMGIMNSFINDIFEKLAQESSRLARYNKKPTITSREIQTAVRLVLPGELAKHAVSEGTKAVTKFTSS.

The span at 1–11 (MAPKAEKKPAE) shows a compositional bias: basic and acidic residues. Positions 1–41 (MAPKAEKKPAEKAPAPKAEKKIAKEGGTSEIVKKKKKTKKS) are disordered. A2 carries the n,N,N-trimethylalanine; alternate modification. N,N-dimethylalanine; alternate is present on A2. A2 carries the post-translational modification N-methylalanine; alternate. Residue K4 is modified to N6-methyllysine. N6-acetyllysine is present on residues K7, K12, K20, and K21. Residue K128 forms a Glycyl lysine isopeptide (Lys-Gly) (interchain with G-Cter in ubiquitin) linkage.

The protein belongs to the histone H2B family. In terms of assembly, the nucleosome is a histone octamer containing two molecules each of H2A, H2B, H3 and H4 assembled in one H3-H4 heterotetramer and two H2A-H2B heterodimers. The octamer wraps approximately 147 bp of DNA. Can be acetylated to form H2BK6ac, H2BK33ac and H2BK34ac. In terms of processing, monoubiquitinated by BRE1 to form H2BK143ub1 and deubiquitinated by UBP26. Required for heterochromatic histone H3 di- and trimethylation at H3K4me. May give a specific tag for epigenetic transcriptional activation.

It localises to the nucleus. It is found in the chromosome. In terms of biological role, core component of nucleosome. Nucleosomes wrap and compact DNA into chromatin, limiting DNA accessibility to the cellular machineries which require DNA as a template. Histones thereby play a central role in transcription regulation, DNA repair, DNA replication and chromosomal stability. DNA accessibility is regulated via a complex set of post-translational modifications of histones, also called histone code, and nucleosome remodeling. In Arabidopsis thaliana (Mouse-ear cress), this protein is Histone H2B.9.